We begin with the raw amino-acid sequence, 194 residues long: dCTP deaminase (194 aa).

Residues 110 to 115 (RSSLAR), D128, 136 to 138 (VLE), Y171, K178, and Q182 each bind dCTP. Residue E138 is the Proton donor/acceptor of the active site.

This sequence belongs to the dCTP deaminase family. As to quaternary structure, homotrimer.

It carries out the reaction dCTP + H2O + H(+) = dUTP + NH4(+). Its pathway is pyrimidine metabolism; dUMP biosynthesis; dUMP from dCTP (dUTP route): step 1/2. Its function is as follows. Catalyzes the deamination of dCTP to dUTP. This is dCTP deaminase from Pseudoalteromonas translucida (strain TAC 125).